Here is a 239-residue protein sequence, read N- to C-terminus: Uridylate kinase (239 aa).

13 to 16 provides a ligand contact to ATP; the sequence is KLSG. Gly55 is a UMP binding site. The ATP site is built by Gly56 and Arg60. UMP contacts are provided by residues Asp75 and 136-143; that span reads TGNPFFTT. Thr163, Asn164, Tyr169, and Asp172 together coordinate ATP.

The protein belongs to the UMP kinase family. In terms of assembly, homohexamer.

The protein localises to the cytoplasm. It carries out the reaction UMP + ATP = UDP + ADP. Its pathway is pyrimidine metabolism; CTP biosynthesis via de novo pathway; UDP from UMP (UMPK route): step 1/1. Inhibited by UTP. Catalyzes the reversible phosphorylation of UMP to UDP. The chain is Uridylate kinase from Neisseria meningitidis serogroup C / serotype 2a (strain ATCC 700532 / DSM 15464 / FAM18).